The chain runs to 351 residues: Mitochondrial mRNA pseudouridine synthase RPUSD3 (351 aa).

A mitochondrion-targeting transit peptide spans 1 to 25 (MRAVLAREMDGRRVLGRFWSGWRRG). Positions 33 to 58 (EDAGFGTEARHQRQPRGSCQRSGPLG) are disordered. The residue at position 71 (serine 71) is a Phosphoserine.

It belongs to the pseudouridine synthase RluA family. As to quaternary structure, forms a regulatory protein-RNA complex, consisting of RCC1L, NGRN, RPUSD3, RPUSD4, TRUB2, FASTKD2 and 16S mt-rRNA.

Its subcellular location is the mitochondrion matrix. The catalysed reaction is a uridine in mRNA = a pseudouridine in mRNA. In terms of biological role, catalyzes uridine to pseudouridine isomerization (pseudouridylation) of specific mitochondrial mRNAs (mt-mRNAs), a post-transcriptional modification necessary for their translation. Acts at position 390 in COXI mt-mRNA and at position 697-699 in mitochondrial COXIII mt-mRNA. As a component of a functional protein-RNA module, consisting of RCC1L, NGRN, RPUSD3, RPUSD4, TRUB2, FASTKD2 and 16S mitochondrial ribosomal RNA (16S mt-rRNA), controls 16S mt-rRNA abundance and may play a role in mitochondrial ribosome biogenesis. This is Mitochondrial mRNA pseudouridine synthase RPUSD3 from Homo sapiens (Human).